Here is a 471-residue protein sequence, read N- to C-terminus: Putative multidrug resistance protein MdtD (471 aa).

A run of 13 helical transmembrane segments spans residues 12–32 (LWIV…VNTA), 49–69 (MVVV…GWLA), 77–97 (IFFT…WSST), 102–124 (VLAR…LTVM), 138–158 (FVTL…GILV), 165–185 (WIFL…LMLM), 197–217 (LSGF…LDGS), 222–242 (LSPL…ALYL), 263–283 (FSLG…LPFM), 286–306 (VFLQ…MIPM), 342–362 (LLFM…VLFL), 396–416 (MIMQ…LGMF), and 431–451 (VFMY…LIFA).

It belongs to the major facilitator superfamily. TCR/Tet family.

It localises to the cell inner membrane. The sequence is that of Putative multidrug resistance protein MdtD from Citrobacter koseri (strain ATCC BAA-895 / CDC 4225-83 / SGSC4696).